A 140-amino-acid polypeptide reads, in one-letter code: Large ribosomal subunit protein uL11 (140 aa).

It belongs to the universal ribosomal protein uL11 family. Part of the ribosomal stalk of the 50S ribosomal subunit. Interacts with L10 and the large rRNA to form the base of the stalk. L10 forms an elongated spine to which L12 dimers bind in a sequential fashion forming a multimeric L10(L12)X complex. Post-translationally, one or more lysine residues are methylated.

Its function is as follows. Forms part of the ribosomal stalk which helps the ribosome interact with GTP-bound translation factors. This is Large ribosomal subunit protein uL11 from Dehalococcoides mccartyi (strain ATCC BAA-2266 / KCTC 15142 / 195) (Dehalococcoides ethenogenes (strain 195)).